The sequence spans 303 residues: Oxygen-dependent coproporphyrinogen-III oxidase (303 aa).

S93 is a binding site for substrate. Positions 97 and 107 each coordinate a divalent metal cation. The active-site Proton donor is the H107. A substrate-binding site is contributed by 109–111; that stretch reads NVR. Positions 146 and 176 each coordinate a divalent metal cation. The tract at residues 241–276 is important for dimerization; that stretch reads YVEFNLVYDRGTLFGLQSGGRTESILMSLPPQVRWG. Residue 259–261 participates in substrate binding; the sequence is GGR.

Belongs to the aerobic coproporphyrinogen-III oxidase family. Homodimer. A divalent metal cation is required as a cofactor.

The protein localises to the cytoplasm. It catalyses the reaction coproporphyrinogen III + O2 + 2 H(+) = protoporphyrinogen IX + 2 CO2 + 2 H2O. The protein operates within porphyrin-containing compound metabolism; protoporphyrin-IX biosynthesis; protoporphyrinogen-IX from coproporphyrinogen-III (O2 route): step 1/1. In terms of biological role, involved in the heme biosynthesis. Catalyzes the aerobic oxidative decarboxylation of propionate groups of rings A and B of coproporphyrinogen-III to yield the vinyl groups in protoporphyrinogen-IX. The chain is Oxygen-dependent coproporphyrinogen-III oxidase from Pseudomonas putida (strain ATCC 700007 / DSM 6899 / JCM 31910 / BCRC 17059 / LMG 24140 / F1).